The following is a 99-amino-acid chain: Large ribosomal subunit protein uL23 (99 aa).

Belongs to the universal ribosomal protein uL23 family. As to quaternary structure, part of the 50S ribosomal subunit. Contacts protein L29, and trigger factor when it is bound to the ribosome.

Its function is as follows. One of the early assembly proteins it binds 23S rRNA. One of the proteins that surrounds the polypeptide exit tunnel on the outside of the ribosome. Forms the main docking site for trigger factor binding to the ribosome. This chain is Large ribosomal subunit protein uL23, found in Haemophilus influenzae (strain 86-028NP).